We begin with the raw amino-acid sequence, 86 residues long: Large ribosomal subunit protein bL27 (86 aa).

A compositionally biased stretch (gly residues) spans 1–10 (MAQKKGGGST). The disordered stretch occupies residues 1 to 21 (MAQKKGGGSTRNGRDSESKRL).

It belongs to the bacterial ribosomal protein bL27 family.

This is Large ribosomal subunit protein bL27 from Cupriavidus necator (strain ATCC 17699 / DSM 428 / KCTC 22496 / NCIMB 10442 / H16 / Stanier 337) (Ralstonia eutropha).